A 72-amino-acid polypeptide reads, in one-letter code: Small ribosomal subunit protein bS18 (72 aa).

This sequence belongs to the bacterial ribosomal protein bS18 family. Part of the 30S ribosomal subunit. Forms a tight heterodimer with protein bS6.

Binds as a heterodimer with protein bS6 to the central domain of the 16S rRNA, where it helps stabilize the platform of the 30S subunit. This Fusobacterium nucleatum subsp. nucleatum (strain ATCC 25586 / DSM 15643 / BCRC 10681 / CIP 101130 / JCM 8532 / KCTC 2640 / LMG 13131 / VPI 4355) protein is Small ribosomal subunit protein bS18.